The primary structure comprises 272 residues: Putative MgpC-like protein MPN_102 (272 aa).

Belongs to the MgpC family.

The polypeptide is Putative MgpC-like protein MPN_102 (Mycoplasma pneumoniae (strain ATCC 29342 / M129 / Subtype 1) (Mycoplasmoides pneumoniae)).